A 473-amino-acid chain; its full sequence is Asparagine--tRNA ligase (473 aa).

The protein belongs to the class-II aminoacyl-tRNA synthetase family. Homodimer.

The protein resides in the cytoplasm. It catalyses the reaction tRNA(Asn) + L-asparagine + ATP = L-asparaginyl-tRNA(Asn) + AMP + diphosphate + H(+). The polypeptide is Asparagine--tRNA ligase (Treponema denticola (strain ATCC 35405 / DSM 14222 / CIP 103919 / JCM 8153 / KCTC 15104)).